Here is a 427-residue protein sequence, read N- to C-terminus: tRNA(Ile)-lysidine synthase (427 aa).

Position 29 to 34 (29 to 34 (SGGVDS)) interacts with ATP.

It belongs to the tRNA(Ile)-lysidine synthase family.

The protein localises to the cytoplasm. It carries out the reaction cytidine(34) in tRNA(Ile2) + L-lysine + ATP = lysidine(34) in tRNA(Ile2) + AMP + diphosphate + H(+). Functionally, ligates lysine onto the cytidine present at position 34 of the AUA codon-specific tRNA(Ile) that contains the anticodon CAU, in an ATP-dependent manner. Cytidine is converted to lysidine, thus changing the amino acid specificity of the tRNA from methionine to isoleucine. In Thermosipho africanus (strain TCF52B), this protein is tRNA(Ile)-lysidine synthase.